We begin with the raw amino-acid sequence, 297 residues long: Phosphoribosylaminoimidazole-succinocarboxamide synthase (297 aa).

The protein belongs to the SAICAR synthetase family.

It catalyses the reaction 5-amino-1-(5-phospho-D-ribosyl)imidazole-4-carboxylate + L-aspartate + ATP = (2S)-2-[5-amino-1-(5-phospho-beta-D-ribosyl)imidazole-4-carboxamido]succinate + ADP + phosphate + 2 H(+). The protein operates within purine metabolism; IMP biosynthesis via de novo pathway; 5-amino-1-(5-phospho-D-ribosyl)imidazole-4-carboxamide from 5-amino-1-(5-phospho-D-ribosyl)imidazole-4-carboxylate: step 1/2. This chain is Phosphoribosylaminoimidazole-succinocarboxamide synthase, found in Methylobacillus flagellatus (strain ATCC 51484 / DSM 6875 / VKM B-1610 / KT).